We begin with the raw amino-acid sequence, 86 residues long: Kappa-theraphotoxin-Cg1a 4 (86 aa).

A signal peptide spans 1–21 (MKASVLITLAVLGVMFVWASA). A propeptide spanning residues 22–50 (AELEERGSDQRDSPAWLKSMERIFQSEER) is cleaved from the precursor. Intrachain disulfides connect cysteine 52/cysteine 66, cysteine 59/cysteine 71, and cysteine 65/cysteine 78. Phenylalanine 84 is modified (phenylalanine amide).

The protein belongs to the neurotoxin 10 (Hwtx-1) family. 28 (Jztx-11) subfamily. In terms of tissue distribution, expressed by the venom gland.

It localises to the secreted. This toxin acts as a voltage-dependent gating-modifier. It inhibits the sodium conductance (IC(50)=124 nM) and slows the fast inactivation (EC(50)=1180 nM) of Nav1.5/SCN5A. It significantly shifts the activation to more depolarized voltages and decreases the deactivation of Nav1.5 currents upon extreme depolarization, but only slightly affects voltage-dependence of steady-state inactivation. In addition, this toxin causes an approximately five-fold decrease in the rate of recovery from inactivation and an approximately 1.9-fold reduction in the closed-state inactivation rate. This toxin integrates the functions of site 3 toxins (alpha-scorpion toxins) with site 4 toxins (beta-scorpion and spider toxins) by targeting multiple sites on Nav1.5. Also shows inhibition of voltage-gated potassium channels (5 uM completely inhibits Kv2.1/KCNB1, whereas 5 uM moderately inhibits Kv4.2/KCND2 Kv4.1/KCND1 channels). This is Kappa-theraphotoxin-Cg1a 4 from Chilobrachys guangxiensis (Chinese earth tiger tarantula).